We begin with the raw amino-acid sequence, 422 residues long: Putative nickel insertion protein (422 aa).

The protein belongs to the LarC family.

The protein is Putative nickel insertion protein of Synechocystis sp. (strain ATCC 27184 / PCC 6803 / Kazusa).